A 127-amino-acid chain; its full sequence is UPF0102 protein Paes_0016 (127 aa).

The protein belongs to the UPF0102 family.

This chain is UPF0102 protein Paes_0016, found in Prosthecochloris aestuarii (strain DSM 271 / SK 413).